A 793-amino-acid chain; its full sequence is Plakophilin-3 (793 aa).

Residues glutamine 56–alanine 82 are disordered. A compositionally biased stretch (low complexity) spans proline 66–alanine 82. Arginine 81 is modified (omega-N-methylarginine). Serine 122, serine 179, and serine 182 each carry phosphoserine. Tyrosine 194 is subject to Phosphotyrosine. The tract at residues serine 221–arginine 240 is disordered. Position 239 is a phosphoserine (serine 239). A Phosphothreonine modification is found at threonine 249. Arginine 260 is modified (omega-N-methylarginine). 4 positions are modified to phosphoserine: serine 282, serine 310, serine 311, and serine 328. The segment at serine 282 to leucine 285 is required for interaction with SFN. Positions leucine 291–valine 720 are required for interaction with GSK3B. 8 ARM repeats span residues glycine 302–tyrosine 345, alanine 348–tyrosine 387, alanine 390–serine 429, threonine 446–serine 484, alanine 488–tyrosine 533, proline 592–alanine 633, valine 641–arginine 680, and lysine 685–valine 726. The segment at valine 513–proline 793 is required for binding to PKP2 mRNA.

The protein belongs to the beta-catenin family. As to quaternary structure, found in a complex composed of CDH1, RAP1A and PKP3; PKP3 acts as a scaffold protein within the complex, the complex is required for CDH1 localization to mature desmosome cell junctions. Interacts with FXR1; the interaction facilitates the binding of PKP3 to PKP2 mRNA. Interacts (via ARM repeats) with GSK3B; the interaction may be involved in PKP3 protein degradation. Interacts with hyperphosphorylated and hypophosphorylated RB1; the interaction inhibits RB1 interaction with and repression of the transcription factor E2F1, potentially via sequestering RB1 to the cytoplasm. Interacts with CDKN1A; the interaction sequesters CDKN1A to the cytoplasm thereby repressing its role as an inhibitor of CDK4- and CDK6-driven RB1 phosphorylation. Interacts (via N-terminus) with SFN; the interaction maintains the cytoplasmic pool of PKP3, facilitates PKP3 exchange at desmosomes and restricts PKP3 localization to existing desmosome cell junctions. Interacts (via N-terminus) with SFN; the interaction maintains the cytoplasmic pool of PKP3 and restricts PKP3 localization to existing desmosome cell junctions. Interacts (via N-terminus) with JUP; the interaction is required for PKP3 localization to desmosome cell-cell junctions. Post-translationally, phosphorylated at Ser-282 when localized to the cytoplasm, PKP3 at desmosome cell junctions is not phosphorylated. Phosphorylation at Try-194 by SRC is induced by reactive oxygen species and potentially acts as a release mechanism from desmosome cell-cell junctions.

The protein localises to the nucleus. It localises to the cell junction. Its subcellular location is the desmosome. It is found in the cytoplasm. The protein resides in the cell membrane. The protein localises to the adherens junction. A component of desmosome cell-cell junctions which are required for positive regulation of cellular adhesion. Required for the localization of DSG2, DSP and PKP2 to mature desmosome junctions. May also play a role in the maintenance of DSG3 protein abundance in keratinocytes. Required for the formation of DSP-containing desmosome precursors in the cytoplasm during desmosome assembly. Also regulates the accumulation of CDH1 to mature desmosome junctions, via cAMP-dependent signaling and its interaction with activated RAP1A. Positively regulates the stabilization of PKP2 mRNA and therefore protein abundance, via its interaction with FXR1, may also regulate the protein abundance of DSP via the same mechanism. May also regulate the protein abundance of the desmosome component PKP1. Required for the organization of desmosome junctions at intercellular borders between basal keratinocytes of the epidermis, as a result plays a role in maintenance of the dermal barrier and regulation of the dermal inflammatory response. Required during epidermal keratinocyte differentiation for cell adherence at tricellular cell-cell contacts, via regulation of the timely formation of adherens junctions and desmosomes in a calcium-dependent manner, and may also play a role in the organization of the intracellular actin fiber belt. Acts as a negative regulator of the inflammatory response in hematopoietic cells of the skin and intestine, via modulation of proinflammatory cytokine production. Important for epithelial barrier maintenance in the intestine to reduce intestinal permeability, thereby plays a role in protection from intestinal-derived endotoxemia. Required for the development of hair follicles, via a role in the regulation of inner root sheaf length, correct alignment and anterior-posterior polarity of hair follicles. Promotes proliferation and cell-cycle G1/S phase transition of keratinocytes. Promotes E2F1-driven transcription of G1/S phase promoting genes by acting to release E2F1 from its inhibitory interaction with RB1, via sequestering RB1 and CDKN1A to the cytoplasm and thereby increasing CDK4- and CDK6-driven phosphorylation of RB1. May act as a scaffold protein to facilitate MAPK phosphorylation of RPS6KA protein family members and subsequently promote downstream EGFR signaling. May play a role in the positive regulation of transcription of Wnt-mediated TCF-responsive target genes. This is Plakophilin-3 (PKP3) from Bos taurus (Bovine).